Reading from the N-terminus, the 202-residue chain is N-(5'-phosphoribosyl)anthranilate isomerase (202 aa).

The protein belongs to the TrpF family.

It catalyses the reaction N-(5-phospho-beta-D-ribosyl)anthranilate = 1-(2-carboxyphenylamino)-1-deoxy-D-ribulose 5-phosphate. Its pathway is amino-acid biosynthesis; L-tryptophan biosynthesis; L-tryptophan from chorismate: step 3/5. The polypeptide is N-(5'-phosphoribosyl)anthranilate isomerase (Listeria monocytogenes serovar 1/2a (strain ATCC BAA-679 / EGD-e)).